Reading from the N-terminus, the 145-residue chain is FAD synthase (145 aa).

Residues 5–6 (TF), 10–13 (HPGH), Asp92, and Tyr119 each bind ATP.

The protein belongs to the archaeal FAD synthase family. In terms of assembly, homodimer. It depends on a divalent metal cation as a cofactor.

It carries out the reaction FMN + ATP + H(+) = FAD + diphosphate. Its pathway is cofactor biosynthesis; FAD biosynthesis; FAD from FMN: step 1/1. Catalyzes the transfer of the AMP portion of ATP to flavin mononucleotide (FMN) to produce flavin adenine dinucleotide (FAD) coenzyme. The polypeptide is FAD synthase (Methanothermus fervidus (strain ATCC 43054 / DSM 2088 / JCM 10308 / V24 S)).